Here is a 189-residue protein sequence, read N- to C-terminus: Elongation factor P (189 aa).

Lys34 carries the N6-(3,6-diaminohexanoyl)-5-hydroxylysine modification.

The protein belongs to the elongation factor P family. May be beta-lysylated on the epsilon-amino group of Lys-34 by the combined action of EpmA and EpmB, and then hydroxylated on the C5 position of the same residue by EpmC (if this protein is present). Lysylation is critical for the stimulatory effect of EF-P on peptide-bond formation. The lysylation moiety may extend toward the peptidyltransferase center and stabilize the terminal 3-CCA end of the tRNA. Hydroxylation of the C5 position on Lys-34 may allow additional potential stabilizing hydrogen-bond interactions with the P-tRNA.

It is found in the cytoplasm. It participates in protein biosynthesis; polypeptide chain elongation. Its function is as follows. Involved in peptide bond synthesis. Alleviates ribosome stalling that occurs when 3 or more consecutive Pro residues or the sequence PPG is present in a protein, possibly by augmenting the peptidyl transferase activity of the ribosome. Modification of Lys-34 is required for alleviation. The sequence is that of Elongation factor P from Teredinibacter turnerae (strain ATCC 39867 / T7901).